The primary structure comprises 156 residues: Cyanate hydratase (156 aa).

Residues Arg-96, Glu-99, and Ser-122 contribute to the active site.

Belongs to the cyanase family.

It catalyses the reaction cyanate + hydrogencarbonate + 3 H(+) = NH4(+) + 2 CO2. Its function is as follows. Catalyzes the reaction of cyanate with bicarbonate to produce ammonia and carbon dioxide. This chain is Cyanate hydratase, found in Pseudomonas entomophila (strain L48).